Here is a 96-residue protein sequence, read N- to C-terminus: Co-chaperonin GroES (96 aa).

This sequence belongs to the GroES chaperonin family. Heptamer of 7 subunits arranged in a ring. Interacts with the chaperonin GroEL.

The protein resides in the cytoplasm. Functionally, together with the chaperonin GroEL, plays an essential role in assisting protein folding. The GroEL-GroES system forms a nano-cage that allows encapsulation of the non-native substrate proteins and provides a physical environment optimized to promote and accelerate protein folding. GroES binds to the apical surface of the GroEL ring, thereby capping the opening of the GroEL channel. The polypeptide is Co-chaperonin GroES (Verminephrobacter eiseniae (strain EF01-2)).